We begin with the raw amino-acid sequence, 705 residues long: Elongation factor G (705 aa).

The tr-type G domain occupies 8–290; that stretch reads ERYRNFGIMA…GVVHLLPSPA (283 aa). GTP contacts are provided by residues 17 to 24, 88 to 92, and 142 to 145; these read AHIDAGKT, DTPGH, and NKMD. The segment at 290-309 is disordered; that stretch reads ADRPPVQGIDEDEKEDTRAA.

Belongs to the TRAFAC class translation factor GTPase superfamily. Classic translation factor GTPase family. EF-G/EF-2 subfamily.

It is found in the cytoplasm. Functionally, catalyzes the GTP-dependent ribosomal translocation step during translation elongation. During this step, the ribosome changes from the pre-translocational (PRE) to the post-translocational (POST) state as the newly formed A-site-bound peptidyl-tRNA and P-site-bound deacylated tRNA move to the P and E sites, respectively. Catalyzes the coordinated movement of the two tRNA molecules, the mRNA and conformational changes in the ribosome. This is Elongation factor G from Xanthomonas axonopodis pv. citri (strain 306).